The sequence spans 194 residues: MENTQENPTSQNPKPAEETARQAAEAAAPQQEAAANAATDSPASAEQAALAEAQAKIAELQESFLRAKAETENVRRRAQEDVAKAHKFAIESFAEHLLPVIDSLEAAVAHSSDDPAKVREGVELTLRQLTGALEKGRVVALNPVGEKFDPHRHQAISMVPADQEPNTVVAVLQKGFVIADRVLRPALVTVAAPK.

Polar residues predominate over residues 1-13 (MENTQENPTSQNP). Residues 1–50 (MENTQENPTSQNPKPAEETARQAAEAAAPQQEAAANAATDSPASAEQAAL) form a disordered region. Over residues 21–50 (RQAAEAAAPQQEAAANAATDSPASAEQAAL) the composition is skewed to low complexity.

It belongs to the GrpE family. Homodimer.

It is found in the cytoplasm. Its function is as follows. Participates actively in the response to hyperosmotic and heat shock by preventing the aggregation of stress-denatured proteins, in association with DnaK and GrpE. It is the nucleotide exchange factor for DnaK and may function as a thermosensor. Unfolded proteins bind initially to DnaJ; upon interaction with the DnaJ-bound protein, DnaK hydrolyzes its bound ATP, resulting in the formation of a stable complex. GrpE releases ADP from DnaK; ATP binding to DnaK triggers the release of the substrate protein, thus completing the reaction cycle. Several rounds of ATP-dependent interactions between DnaJ, DnaK and GrpE are required for fully efficient folding. This is Protein GrpE from Paraburkholderia xenovorans (strain LB400).